A 465-amino-acid polypeptide reads, in one-letter code: Ribosomal oxygenase 2 (465 aa).

The JmjC domain maps to 139–271 (QPQRFKDELW…NSWGDYLLDS (133 aa)). 3 residues coordinate Fe cation: H179, D181, and H240. Residue S309 is modified to Phosphoserine.

Belongs to the ROX family. MINA53 subfamily. The cofactor is Fe(2+).

The protein localises to the nucleus. It localises to the nucleolus. It carries out the reaction L-histidyl-[ribosomal protein uL15] + 2-oxoglutarate + O2 = (3S)-3-hydroxy-L-histidyl-[ribosomal protein uL15] + succinate + CO2. The enzyme catalyses L-histidyl-[protein] + 2-oxoglutarate + O2 = (3S)-3-hydroxy-L-histidyl-[protein] + succinate + CO2. Oxygenase that can act as both a histone lysine demethylase and a ribosomal histidine hydroxylase. Is involved in the demethylation of trimethylated 'Lys-9' on histone H3 (H3K9me3), leading to an increase in ribosomal RNA expression. Also catalyzes the hydroxylation of 60S ribosomal protein L27a on 'His-39'. May play an important role in cell growth and survival. May be involved in ribosome biogenesis, most likely during the assembly process of pre-ribosomal particles. This Rattus norvegicus (Rat) protein is Ribosomal oxygenase 2.